The primary structure comprises 765 residues: Dipeptidyl peptidase 4 (765 aa).

At 1–6 (MKTPWK) the chain is on the cytoplasmic side. Residues 7 to 29 (VLLGLLGLAALITIITVPVVLLN) traverse the membrane as a helical; Signal-anchor for type II membrane protein segment. At 30–765 (KGNDAAADSR…HFIKQCFSLP (736 aa)) the chain is on the extracellular side. N-linked (GlcNAc...) asparagine glycosylation is found at Asn84, Asn91, Asn149, Asn178, Asn228, Asn280, Asn320, Asn330, and Asn331. Disulfide bonds link Cys384–Cys393, Cys443–Cys446, and Cys453–Cys471. Asn519 is a glycosylation site (N-linked (GlcNAc...) asparagine). The active-site Charge relay system is the Ser629. A disulfide bond links Cys648 and Cys761. A glycan (N-linked (GlcNAc...) asparagine) is linked at Asn684. Active-site charge relay system residues include Asp707 and His739.

Belongs to the peptidase S9B family. DPPIV subfamily. Monomer. Homodimer. Heterodimer with Seprase (FAP). Requires homodimerization for optimal dipeptidyl peptidase activity and T-cell costimulation. Found in a membrane raft complex, at least composed of BCL10, CARD11, DPP4 and IKBKB. Associates with collagen. Interacts with PTPRC; the interaction is enhanced in an interleukin-12-dependent manner in activated lymphocytes. Interacts (extracellular domain) with ADA; does not inhibit its dipeptidyl peptidase activity. Interacts with CAV1 (via the N-terminus); the interaction is direct. Interacts (via cytoplasmic tail) with CARD11 (via PDZ domain); its homodimerization is necessary for interaction with CARD11. Interacts with IGF2R; the interaction is direct. Interacts with GPC3. The soluble form (Dipeptidyl peptidase 4 soluble form also named SDPP) derives from the membrane form (Dipeptidyl peptidase 4 membrane form also named MDPP) by proteolytic processing. Post-translationally, N- and O-Glycosylated. In terms of processing, phosphorylated. Mannose 6-phosphate residues in the carbohydrate moiety are necessary for interaction with IGF2R in activated T-cells. Mannose 6-phosphorylation is induced during T-cell activation.

It localises to the secreted. The protein localises to the cell membrane. It is found in the apical cell membrane. The protein resides in the cell projection. Its subcellular location is the invadopodium membrane. It localises to the lamellipodium membrane. The protein localises to the cell junction. It is found in the membrane raft. It catalyses the reaction Release of an N-terminal dipeptide, Xaa-Yaa-|-Zaa-, from a polypeptide, preferentially when Yaa is Pro, provided Zaa is neither Pro nor hydroxyproline.. With respect to regulation, inhibited by GPC3 and diprotin A. Functionally, cell surface glycoprotein receptor involved in the costimulatory signal essential for T-cell receptor (TCR)-mediated T-cell activation. Acts as a positive regulator of T-cell coactivation, by binding at least ADA, CAV1, IGF2R, and PTPRC. Its binding to CAV1 and CARD11 induces T-cell proliferation and NF-kappa-B activation in a T-cell receptor/CD3-dependent manner. Its interaction with ADA also regulates lymphocyte-epithelial cell adhesion. In association with FAP is involved in the pericellular proteolysis of the extracellular matrix (ECM), the migration and invasion of endothelial cells into the ECM. May be involved in the promotion of lymphatic endothelial cells adhesion, migration and tube formation. When overexpressed, enhanced cell proliferation, a process inhibited by GPC3. Also acts as a serine exopeptidase with a dipeptidyl peptidase activity that regulates various physiological processes by cleaving peptides in the circulation, including many chemokines, mitogenic growth factors, neuropeptides and peptide hormones. Removes N-terminal dipeptides sequentially from polypeptides having unsubstituted N-termini provided that the penultimate residue is proline. This is Dipeptidyl peptidase 4 (DPP4) from Felis catus (Cat).